The primary structure comprises 421 residues: Fumarylacetoacetase (421 aa).

Asp131 contacts Ca(2+). Catalysis depends on His138, which acts as the Proton acceptor. Arg147 serves as a coordination point for substrate. The Ca(2+) site is built by Glu204, Glu206, and Asp238. Asp238 serves as a coordination point for Mg(2+). Substrate contacts are provided by Gln245 and Tyr249. Mg(2+)-binding residues include Lys258 and Thr262. A substrate-binding site is contributed by Thr355.

The protein belongs to the FAH family. The cofactor is Ca(2+). Mg(2+) is required as a cofactor.

It catalyses the reaction 4-fumarylacetoacetate + H2O = acetoacetate + fumarate + H(+). Its pathway is amino-acid degradation; L-phenylalanine degradation; acetoacetate and fumarate from L-phenylalanine: step 6/6. Functionally, converts fumarylacetoacetate to acetoacetate and fumarate. Involved in tyrosine catabolic pathway. Catalyzes the final step in the tyrosine degradation pathway. This Arabidopsis thaliana (Mouse-ear cress) protein is Fumarylacetoacetase.